The primary structure comprises 334 residues: Protein-methionine-sulfoxide reductase catalytic subunit MsrP (334 aa).

The tat-type signal signal peptide spans 1–44 (MKKNQFLKESDVTAESVFFMKRRQVLKALGISAAAFSLPHAAHA). Residues Asn88, 91 to 92 (YE), Cys146, Thr181, Asn233, Arg238, and 249 to 251 (GIK) contribute to the Mo-molybdopterin site.

It belongs to the MsrP family. Heterodimer of a catalytic subunit (MsrP) and a heme-binding subunit (MsrQ). It depends on Mo-molybdopterin as a cofactor. Predicted to be exported by the Tat system. The position of the signal peptide cleavage has not been experimentally proven.

It localises to the periplasm. The catalysed reaction is L-methionyl-[protein] + a quinone + H2O = L-methionyl-(S)-S-oxide-[protein] + a quinol. It catalyses the reaction L-methionyl-[protein] + a quinone + H2O = L-methionyl-(R)-S-oxide-[protein] + a quinol. Part of the MsrPQ system that repairs oxidized periplasmic proteins containing methionine sulfoxide residues (Met-O), using respiratory chain electrons. Thus protects these proteins from oxidative-stress damage caused by reactive species of oxygen and chlorine generated by the host defense mechanisms. MsrPQ is essential for the maintenance of envelope integrity under bleach stress, rescuing a wide series of structurally unrelated periplasmic proteins from methionine oxidation, including the primary periplasmic chaperone SurA and the lipoprotein Pal. The catalytic subunit MsrP is non-stereospecific, being able to reduce both (R-) and (S-) diastereoisomers of methionine sulfoxide. This Escherichia coli O6:H1 (strain CFT073 / ATCC 700928 / UPEC) protein is Protein-methionine-sulfoxide reductase catalytic subunit MsrP.